A 716-amino-acid chain; its full sequence is Putative mannosyltransferase YkcB (716 aa).

Helical transmembrane passes span 8–28 (LDIV…YNIW), 44–64 (MMQS…FITV), 87–107 (SVIL…YLLI), 118–135 (IASF…VART), 137–157 (NVDA…FKAI), 159–179 (KGKL…FNTK), 180–200 (MLQA…AANA), and 206–226 (IVSL…WPLI). The disordered stretch occupies residues 260–363 (TGQNSGGGQG…GSGMFGTGTP (104 aa)). Positions 278–289 (EMSSSDNTQAPP) are enriched in polar residues. Positions 290 to 307 (NQSSSNSSSSDGKSSNGN) are enriched in low complexity. Positions 318–347 (PSGGQGGPPSGGDGGQGGPGGDGGKGGTGT) are enriched in gly residues. Helical transmembrane passes span 376 to 396 (QISW…IAGA), 409 to 429 (TVFW…AEFF), 433 to 453 (YLIM…VALV), 462 to 482 (WKAW…LFIL), 491 to 511 (VGWS…LLLF), and 518 to 538 (FSYY…MYWA). A disordered region spans residues 664 to 716 (VASEKWQSSSDQKTENTDSADTSSSKASGENGKMGGPGGMNQSATLYELHADE). Over residues 680-694 (TDSADTSSSKASGEN) the composition is skewed to low complexity.

Belongs to the glycosyltransferase 39 family.

It localises to the cell membrane. This chain is Putative mannosyltransferase YkcB (ykcB), found in Bacillus subtilis (strain 168).